Reading from the N-terminus, the 299-residue chain is tRNA dimethylallyltransferase (299 aa).

13-20 serves as a coordination point for ATP; it reads GPTASGKT. 15-20 contacts substrate; sequence TASGKT. The segment at 38–41 is interaction with substrate tRNA; sequence DSRQ.

The protein belongs to the IPP transferase family. Monomer. The cofactor is Mg(2+).

The catalysed reaction is adenosine(37) in tRNA + dimethylallyl diphosphate = N(6)-dimethylallyladenosine(37) in tRNA + diphosphate. Catalyzes the transfer of a dimethylallyl group onto the adenine at position 37 in tRNAs that read codons beginning with uridine, leading to the formation of N6-(dimethylallyl)adenosine (i(6)A). The polypeptide is tRNA dimethylallyltransferase (Parasynechococcus marenigrum (strain WH8102)).